The primary structure comprises 122 residues: Large ribosomal subunit protein uL14 (122 aa).

The protein belongs to the universal ribosomal protein uL14 family. Part of the 50S ribosomal subunit. Forms a cluster with proteins L3 and L19. In the 70S ribosome, L14 and L19 interact and together make contacts with the 16S rRNA in bridges B5 and B8.

Functionally, binds to 23S rRNA. Forms part of two intersubunit bridges in the 70S ribosome. In Polynucleobacter necessarius subsp. necessarius (strain STIR1), this protein is Large ribosomal subunit protein uL14.